Reading from the N-terminus, the 124-residue chain is Fluoride-specific ion channel FluC (124 aa).

A run of 4 helical transmembrane segments spans residues 4-24 (YLVIAVGGSIGAILRYLTGVY), 36-56 (GTLIVNVVGSFILSFFMILFL), 63-83 (PLWRLFVAVGFCGSYTTLSSI), and 100-120 (LLNIALNFGLSFLSAFAGIVL). Residues Gly75 and Thr78 each coordinate Na(+).

Belongs to the fluoride channel Fluc/FEX (TC 1.A.43) family.

The protein resides in the cell inner membrane. It carries out the reaction fluoride(in) = fluoride(out). Na(+) is not transported, but it plays an essential structural role and its presence is essential for fluoride channel function. Fluoride-specific ion channel. Important for reducing fluoride concentration in the cell, thus reducing its toxicity. This is Fluoride-specific ion channel FluC from Sulfurihydrogenibium sp. (strain YO3AOP1).